The chain runs to 139 residues: Large ribosomal subunit protein eL34 (139 aa).

Residues 113–139 form a disordered region; it reads VSKPPKIAKAPAAAAAAKPAKTATKSK.

The protein belongs to the eukaryotic ribosomal protein eL34 family.

This Ochlerotatus triseriatus (Eastern treehole mosquito) protein is Large ribosomal subunit protein eL34 (RpL34).